The primary structure comprises 138 residues: Putative nickel-responsive regulator (138 aa).

Residues histidine 76, histidine 87, histidine 89, and cysteine 95 each coordinate Ni(2+).

It belongs to the transcriptional regulatory CopG/NikR family. Requires Ni(2+) as cofactor.

Its function is as follows. Transcriptional regulator. The polypeptide is Putative nickel-responsive regulator (Pseudomonas putida (strain ATCC 47054 / DSM 6125 / CFBP 8728 / NCIMB 11950 / KT2440)).